We begin with the raw amino-acid sequence, 296 residues long: Ribosomal RNA small subunit methyltransferase H (296 aa).

Residues Gly-30–His-32, Asp-49, Phe-77, Asp-95, and Gln-102 each bind S-adenosyl-L-methionine.

It belongs to the methyltransferase superfamily. RsmH family.

The protein localises to the cytoplasm. It carries out the reaction cytidine(1402) in 16S rRNA + S-adenosyl-L-methionine = N(4)-methylcytidine(1402) in 16S rRNA + S-adenosyl-L-homocysteine + H(+). Specifically methylates the N4 position of cytidine in position 1402 (C1402) of 16S rRNA. This Hydrogenobaculum sp. (strain Y04AAS1) protein is Ribosomal RNA small subunit methyltransferase H.